Reading from the N-terminus, the 495-residue chain is Phage-like element PBSX protein XkdE (495 aa).

The protein belongs to the phage portal family. PBSX subfamily.

This is Phage-like element PBSX protein XkdE (xkdE) from Bacillus subtilis (strain 168).